A 426-amino-acid polypeptide reads, in one-letter code: MESLTLQPIQKVSGEVNLPGSKSVSNRALLLAALSTGTTRLTNLLDSDDIRHMLNALTQLGVDYQLSADKTVCEVTGVGGAFSSDKALELFLGNAGTAMRPLAAALCLGRGEYVLTGEPRMKERPIGHLVTALREAGADVEYLENENYPPLKITGTGLKSGTVSIDGSISSQFLTAFLMAAPLAEGEVTIKIEGELVSKPYIDITLHIMKQFGVDVINNDYQEFVIPTGQSYTAPGDFLVEGDASSASYFLAAAAIKGGEIKVTGIGKNSIQGDIQFADALEKMGAEIEWGDDYVISRCGELKGIDMDYNHIPDAAMTIATTALFAKGTTAIRNVYNWRVKETDRLAAMATELRKVGAEVEEGEDYIIVNPVAELTHAAIDTYDDHRMAMCFSLVALSDTPVTINDPGCTSKTFPDYFDKLKMLSL.

3-phosphoshikimate contacts are provided by Lys22, Ser23, and Arg27. Residue Lys22 participates in phosphoenolpyruvate binding. Phosphoenolpyruvate contacts are provided by Gly96 and Arg124. 3-phosphoshikimate-binding residues include Ser170, Ser171, Gln172, Ser198, Asp314, Asn337, and Lys341. Gln172 contacts phosphoenolpyruvate. Asp314 (proton acceptor) is an active-site residue. Phosphoenolpyruvate is bound by residues Arg345, Arg387, and Lys412.

The protein belongs to the EPSP synthase family. In terms of assembly, monomer.

The protein localises to the cytoplasm. The catalysed reaction is 3-phosphoshikimate + phosphoenolpyruvate = 5-O-(1-carboxyvinyl)-3-phosphoshikimate + phosphate. It participates in metabolic intermediate biosynthesis; chorismate biosynthesis; chorismate from D-erythrose 4-phosphate and phosphoenolpyruvate: step 6/7. Its function is as follows. Catalyzes the transfer of the enolpyruvyl moiety of phosphoenolpyruvate (PEP) to the 5-hydroxyl of shikimate-3-phosphate (S3P) to produce enolpyruvyl shikimate-3-phosphate and inorganic phosphate. This is 3-phosphoshikimate 1-carboxyvinyltransferase from Vibrio atlanticus (strain LGP32) (Vibrio splendidus (strain Mel32)).